Here is an 84-residue protein sequence, read N- to C-terminus: Protein Tlp homolog (84 aa).

Positions 1–20 (MGKEERYTKKPKPDDRSDNV) are disordered.

Belongs to the Tlp family.

This Caldanaerobacter subterraneus subsp. tengcongensis (strain DSM 15242 / JCM 11007 / NBRC 100824 / MB4) (Thermoanaerobacter tengcongensis) protein is Protein Tlp homolog.